We begin with the raw amino-acid sequence, 359 residues long: Proton-coupled zinc antiporter SLC30A2 (359 aa).

At 1-56 (MASRSFFGALWKSEASRIPPVNLPSVELAVQSNHYCHAQKDSGSHPNSEKQRARRK) the chain is on the cytoplasmic side. The short motif at 34-37 (HYCH) is the Mitochondrial localization signal element. A Zn(2+)-binding site is contributed by C36. The helical transmembrane segment at 57–77 (LYVASAICLVFMIGEIIGGYL) threads the bilayer. Topologically, residues 78-86 (AQSLAIMTD) are lumenal. The chain crosses the membrane as a helical span at residues 87 to 107 (AAHLLTDFASMLISLFSLWVS). Zn(2+) is bound by residues H89 and D93. At 108–123 (SRPATKTMNFGWQRAE) the chain is on the cytoplasmic side. The helical transmembrane segment at 124–144 (ILGALLSVLSIWVVTGVLVYL) threads the bilayer. The Lumenal portion of the chain corresponds to 145-159 (AVQRLISGDYEIKGD). Residues 160 to 180 (TMLITSGCAVAVNIIMGLALH) form a helical membrane-spanning segment. Residues 181–207 (QSGHGHSHGHSHEDSSQQQQNPSVRAA) are Cytoplasmic-facing. Residues 208–228 (FIHVVGDLLQSVGVLVAAYII) form a helical membrane-spanning segment. Residues H210 and D214 each contribute to the Zn(2+) site. Residues 229–236 (YFKPEYKY) are Lumenal-facing. A helical membrane pass occupies residues 237-257 (VDPICTFLFSILVLGTTLTIL). Residues 258 to 291 (RDVILVLMEGTPKGVDFTTVKNLLLSVDGVEALH) lie on the Cytoplasmic side of the membrane. Residues 281–282 (LL) carry the Lysosomal targeting motif motif. S283 carries the phosphoserine modification. Zn(2+)-binding residues include H291, H308, and E342. The helical transmembrane segment at 292–312 (SLHIWALTVAQPVLSVHIAIA) threads the bilayer. Topologically, residues 313 to 359 (QNVDAQAVLKVARDRLQGKFNFHTMTIQIESYSEDMKSCQECQGPSE) are lumenal.

This sequence belongs to the cation diffusion facilitator (CDF) transporter (TC 2.A.4) family. SLC30A subfamily. In terms of assembly, homodimer. Interacts (via lysosomal targeting motif) with AP3D1; in AP-3-mediated transport to lysosomes. Interacts with TMEM163. Phosphorylated at Ser-283. Phosphorylation at Ser-283 prevents localization to lysosomes. Dephosphorylation of Ser-283 which triggers localization to lysosomes, accumulation of zinc into lysosomes and lysosomal-mediated cell death is induced by TNF-alpha. Detected in intestine, kidney, seminal vesicles and testis.

The protein localises to the cytoplasmic vesicle. The protein resides in the secretory vesicle membrane. Its subcellular location is the zymogen granule membrane. It localises to the endosome membrane. It is found in the lysosome membrane. The protein localises to the mitochondrion inner membrane. The enzyme catalyses Zn(2+)(in) + 2 H(+)(out) = Zn(2+)(out) + 2 H(+)(in). Its function is as follows. Electroneutral proton-coupled antiporter concentrating zinc ions into a variety of intracellular organelles including endosomes, zymogen granules and mitochondria. Thereby, plays a crucial role in cellular zinc homeostasis to confer upon cells protection against its potential cytotoxicity. Regulates the zinc concentration of milk, through the transport of zinc ions into secretory vesicles of mammary cells. By concentrating zinc ions into lysosomes participates to lysosomal-mediated cell death during early mammary gland involution. The chain is Proton-coupled zinc antiporter SLC30A2 from Rattus norvegicus (Rat).